We begin with the raw amino-acid sequence, 591 residues long: MEGKWLLCLLLVLGTAAVEAHDGHDDDAIDIEDDLDDVIEEVEDSKSKSDASTPPSPKVTYKAPVPTGEVYFADSFDRGSLSGWILSKAKKDDTDDEIAKYDGKWEVDEMKETKLPGDKGLVLMSRAKHHAISAKLNKPFLFDTKPLIVQYEVNFQNGIECGGAYVKLLSKTAELSLDQFHDKTPYTIMFGPDKCGEDYKLHFIFRHKNPKTGVYEEKHAKRPDADLKTYFTDKKTHLYTLILNPDNSFEILVDQSVVNSGNLLNDMTPPVNPSREIEDPEDRKPEDWDERPKIADPDAVKPDDWDEDAPSKIPDEEATKPEGWLDDEPEYIPDPDAEKPEDWDEDMDGEWEAPQIANPKCESAPGCGVWQRPMIDNPNYKGKWKPPMIDNPNYQGIWKPRKIPNPDFFEDLEPFKMTPFSAIGLELWSMTSDIFFDNFIISGDRRVVDDWANDGWGLKKAADGAAEPGVVLQMLEAAEERPWLWVVYILTVALPVFLVILFCCSGKKQSNAMEYKKTDAPQPDVKDEEGKEEEKNKRDEEEEEEKLEEKQKSDAEEDGVTGSQDEEDSKPKAEEDEILNRSPRNRKPRRE.

A signal peptide spans 1–20; the sequence is MEGKWLLCLLLVLGTAAVEA. Over 21 to 482 the chain is Lumenal; sequence HDGHDDDAID…QMLEAAEERP (462 aa). Residues Ser-75 and Asp-118 each contribute to the Ca(2+) site. Position 138 is an N6-acetyllysine (Lys-138). A disulfide bridge connects residues Cys-161 and Cys-195. Residues Tyr-165, Lys-167, Tyr-186, and Asp-193 each contribute to the an alpha-D-glucoside site. Residues 261-347 are disordered; that stretch reads GNLLNDMTPP…EKPEDWDEDM (87 aa). The span at 275–320 shows a compositional bias: basic and acidic residues; the sequence is REIEDPEDRKPEDWDERPKIADPDAVKPDDWDEDAPSKIPDEEATK. Residues 277–410 form a p domain (Extended arm) region; the sequence is IEDPEDRKPE…RKIPNPDFFE (134 aa). 5 tandem repeats follow at residues 279-291, 296-308, 315-327, 334-346, and 349-359. 2 4 X approximate repeats regions span residues 279-346 and 349-406; these read DPED…WDED and GEWE…IPNP. Acidic residues predominate over residues 324-347; that stretch reads WLDDEPEYIPDPDAEKPEDWDEDM. The interaction with PPIB stretch occupies residues 327–360; it reads DEPEYIPDPDAEKPEDWDEDMDGEWEAPQIANPK. Residues Cys-361 and Cys-367 are joined by a disulfide bond. Tandem repeats lie at residues 368–378, 382–392, and 396–406. An alpha-D-glucoside is bound at residue Glu-426. Asp-437 is a binding site for Ca(2+). The helical transmembrane segment at 483 to 503 threads the bilayer; it reads WLWVVYILTVALPVFLVILFC. 2 S-palmitoyl cysteine lipidation sites follow: Cys-503 and Cys-504. Over 504 to 591 the chain is Cytoplasmic; the sequence is CSGKKQSNAM…SPRNRKPRRE (88 aa). Residues 504–591 are sufficient to mediate interaction with SGIP1; the sequence is CSGKKQSNAM…SPRNRKPRRE (88 aa). The span at 514 to 539 shows a compositional bias: basic and acidic residues; it reads EYKKTDAPQPDVKDEEGKEEEKNKRD. The disordered stretch occupies residues 514-591; the sequence is EYKKTDAPQP…SPRNRKPRRE (78 aa). Position 553 is a phosphoserine (Ser-553). Residues 555 to 568 show a composition bias toward acidic residues; sequence AEEDGVTGSQDEED. Thr-561 carries the phosphothreonine modification. Ser-563 bears the Phosphoserine; by MAPK3 mark. Residue Ser-582 is modified to Phosphoserine.

Belongs to the calreticulin family. Interacts with MAPK3/ERK1. Interacts with KCNH2. Associates with ribosomes. The palmitoylated form interacts with the ribosome-translocon complex component SSR1, promoting efficient folding of glycoproteins. Interacts with SERPINA2P/SERPINA2 and with the S and Z variants of SERPINA1. Interacts with SGIP1; involved in negative regulation of endocytosis. Interacts with PPIB. Interacts with SMIM22. Interacts with TMX2. Interacts with TMEM35A/NACHO. Interacts with CHRNA7. Interacts with reticulophagy regulators RETREG2 and RETREG3. Interacts with DNM1L; may form part of a larger protein complex at the ER-mitochondrial interface during mitochondrial fission. Interacts with ADAM7. In terms of processing, phosphorylated at Ser-563 by MAPK3/ERK1. Phosphorylation by MAPK3/ERK1 increases its association with ribosomes. Palmitoylation by DHHC6 leads to the preferential localization to the perinuclear rough ER. It mediates the association of calnexin with the ribosome-translocon complex (RTC) which is required for efficient folding of glycosylated proteins. Post-translationally, ubiquitinated, leading to proteasomal degradation. Probably ubiquitinated by ZNRF4. Expressed in sperm (at protein level).

The protein localises to the endoplasmic reticulum membrane. It localises to the mitochondrion membrane. Its subcellular location is the melanosome membrane. Calcium-binding protein that interacts with newly synthesized monoglucosylated glycoproteins in the endoplasmic reticulum. It may act in assisting protein assembly and/or in the retention within the ER of unassembled protein subunits. It seems to play a major role in the quality control apparatus of the ER by the retention of incorrectly folded proteins. Associated with partial T-cell antigen receptor complexes that escape the ER of immature thymocytes, it may function as a signaling complex regulating thymocyte maturation. Additionally it may play a role in receptor-mediated endocytosis at the synapse. The polypeptide is Calnexin (Canx) (Mus musculus (Mouse)).